A 236-amino-acid polypeptide reads, in one-letter code: Small ribosomal subunit protein uS3 (236 aa).

In terms of domain architecture, KH type-2 spans 39–107 (VREFLKKSLS…PAQISITEIK (69 aa)).

It belongs to the universal ribosomal protein uS3 family. As to quaternary structure, part of the 30S ribosomal subunit. Forms a tight complex with proteins S10 and S14.

Functionally, binds the lower part of the 30S subunit head. Binds mRNA in the 70S ribosome, positioning it for translation. The chain is Small ribosomal subunit protein uS3 from Wigglesworthia glossinidia brevipalpis.